Consider the following 557-residue polypeptide: uncharacterized protein (557 aa).

An N-terminal signal peptide occupies residues 1–30; the sequence is MAPRRRRHTRIAGLRVVGTATLVAATTLTA. Cys31 carries N-palmitoyl cysteine lipidation. Cys31 is lipidated: S-diacylglycerol cysteine.

It to M.bovis Mb2616c and M.leprae ML0489.

Its subcellular location is the cell membrane. This is an uncharacterized protein from Mycobacterium tuberculosis (strain CDC 1551 / Oshkosh).